Here is a 612-residue protein sequence, read N- to C-terminus: uncharacterized protein (612 aa).

The zn(2)-C6 fungal-type DNA-binding region spans 6-32; that stretch reads CLYCRRRKIKCDKNRPCHNCFVAKREC.

Its subcellular location is the cytoplasm. The protein resides in the nucleus. This is an uncharacterized protein from Schizosaccharomyces pombe (strain 972 / ATCC 24843) (Fission yeast).